The primary structure comprises 245 residues: Carbohydrate deacetylase (245 aa).

The Mg(2+) site is built by histidine 59 and histidine 125.

It belongs to the YdjC deacetylase family. Homodimer. It depends on Mg(2+) as a cofactor.

Probably catalyzes the deacetylation of acetylated carbohydrates an important step in the degradation of oligosaccharides. The polypeptide is Carbohydrate deacetylase (Listeria monocytogenes serotype 4b (strain CLIP80459)).